The following is a 366-amino-acid chain: RISC-loading complex subunit TARBP2 (366 aa).

3 sufficient for interaction with PRKRA regions span residues 22–105 (MLAA…EPAL), 152–234 (SPQQ…DARD), and 287–366 (LGAL…AGSK). The DRBM 1 domain occupies 30–97 (TPISLLQEYG…AEVALKHLKG (68 aa)). The segment at 135 to 158 (PSAVPTRSSPMEVQPPVSPQQSEC) is disordered. Serine 152 carries the phosphoserine modification. 2 DRBM domains span residues 159 to 227 (NPVG…RVHT) and 293 to 361 (ACCS…YLKI). The sufficient for interaction with DICER1 stretch occupies residues 228–366 (VPLDARDGNE…QYLKIMAGSK (139 aa)).

It belongs to the TARBP2 family. In terms of assembly, self-associates. Component of the RISC loading complex (RLC), or micro-RNA (miRNA) loading complex (miRLC), which is composed of DICER1, AGO2 and TARBP2. Note that the trimeric RLC/miRLC is also referred to as RISC. Interacts with EIF2AK2/PKR and inhibits its protein kinase activity. Interacts with DHX9 and PRKRA. Interacts with DICER1, AGO2, MOV10, EIF6 and RPL7A (60S ribosome subunit); they form a large RNA-induced silencing complex (RISC). Interacts with IRF7; this interaction prevents IRF7 phosphorylation and activation.

It localises to the cytoplasm. The protein localises to the perinuclear region. The protein resides in the nucleus. Required for formation of the RNA induced silencing complex (RISC). Component of the RISC loading complex (RLC), also known as the micro-RNA (miRNA) loading complex (miRLC), which is composed of DICER1, AGO2 and TARBP2. Within the RLC/miRLC, DICER1 and TARBP2 are required to process precursor miRNAs (pre-miRNAs) to mature miRNAs and then load them onto AGO2. AGO2 bound to the mature miRNA constitutes the minimal RISC and may subsequently dissociate from DICER1 and TARBP2. May also play a role in the production of short interfering RNAs (siRNAs) from double-stranded RNA (dsRNA) by DICER1. Binds in vitro to the PRM1 3'-UTR. Seems to act as a repressor of translation. For some pre-miRNA substrates, may also alter the choice of cleavage site by DICER1. Negatively regulates IRF7-mediated IFN-beta signaling triggered by viral infection by inhibiting the phosphorylation of IRF7 and promoting its 'Lys'-48-linked ubiquitination and degradation. The sequence is that of RISC-loading complex subunit TARBP2 from Bos taurus (Bovine).